Reading from the N-terminus, the 200-residue chain is MKKIVLATGNQGKVREMADLLADFGFDVVAQSEFNVSEVAETGTTFIENAIIKARHAAKETGLAAIADDSGLEVDFLQGAPGIYSARYAGEKASDQENLEKLLTAMEGVPEAQRTARFHCVLVLMRHENDPTPIVCHGKWEGRILTQAHGDNGFGYDPIFFVPEDNCASAELEPVRKKQLSHRGKALKQLFATLREQPLV.

Substrate is bound at residue 8–13 (TGNQGK). The active-site Proton acceptor is the Asp-69. Asp-69 contributes to the Mg(2+) binding site. Residues Ser-70, 154 to 157 (FGYD), Lys-177, and 182 to 183 (HR) each bind substrate.

It belongs to the HAM1 NTPase family. In terms of assembly, homodimer. Mg(2+) serves as cofactor.

It catalyses the reaction XTP + H2O = XMP + diphosphate + H(+). The enzyme catalyses dITP + H2O = dIMP + diphosphate + H(+). The catalysed reaction is ITP + H2O = IMP + diphosphate + H(+). Its function is as follows. Pyrophosphatase that catalyzes the hydrolysis of nucleoside triphosphates to their monophosphate derivatives, with a high preference for the non-canonical purine nucleotides XTP (xanthosine triphosphate), dITP (deoxyinosine triphosphate) and ITP. Seems to function as a house-cleaning enzyme that removes non-canonical purine nucleotides from the nucleotide pool, thus preventing their incorporation into DNA/RNA and avoiding chromosomal lesions. This is dITP/XTP pyrophosphatase from Vibrio vulnificus (strain CMCP6).